The sequence spans 179 residues: MKFLYDLFPVILFFIVYKLFGIYEATAAAIAATIAQIAWAKITTGKVDNALIMSGVIIVVFGGATLWLQDESFIKWKPTILYWVFTVGLLGSQWLFKRNLIRGLMEKQITMPDPIWSRLNLAWAIFFLLLGFLNLYVAYNYSTDLWVDFKLFGTMGLMFVFVIGQTLLLNKHITEQDKK.

The next 5 helical transmembrane spans lie at 3-23 (FLYDLFPVILFFIVYKLFGIY), 49-69 (NALIMSGVIIVVFGGATLWLQ), 76-96 (WKPTILYWVFTVGLLGSQWLF), 119-139 (LNLAWAIFFLLLGFLNLYVAY), and 149-169 (FKLFGTMGLMFVFVIGQTLLL).

This sequence belongs to the YciB family.

It is found in the cell inner membrane. Plays a role in cell envelope biogenesis, maintenance of cell envelope integrity and membrane homeostasis. The polypeptide is Inner membrane-spanning protein YciB (Methylobacillus flagellatus (strain ATCC 51484 / DSM 6875 / VKM B-1610 / KT)).